The primary structure comprises 118 residues: Large ribosomal subunit protein uL18 (118 aa).

The disordered stretch occupies residues 1 to 24; the sequence is MISKPDKNKIRQKRHRRVRGKLSG. The span at 10-20 shows a compositional bias: basic residues; that stretch reads IRQKRHRRVRG.

It belongs to the universal ribosomal protein uL18 family. In terms of assembly, part of the 50S ribosomal subunit; part of the 5S rRNA/L5/L18/L25 subcomplex. Contacts the 5S and 23S rRNAs.

In terms of biological role, this is one of the proteins that bind and probably mediate the attachment of the 5S RNA into the large ribosomal subunit, where it forms part of the central protuberance. This is Large ribosomal subunit protein uL18 from Streptococcus agalactiae serotype III (strain NEM316).